The sequence spans 252 residues: Adenosylcobinamide-GDP ribazoletransferase (252 aa).

The next 7 helical transmembrane spans lie at 4-24, 38-58, 60-80, 113-133, 141-161, 190-210, and 232-252; these read LFKGLMMSLSMFTIIPMPYVE, PIIGLIVGCVWFLGYKLINYL, ISIVLKSALIMIIPFIITGML, FSVISVIILFFIQFGAVHSFL, ILMFLPIISRNIVAYFFITII, LVCILFGIILGYIGIVILLIV, and VAGFSLVVGELVGLFSACLFT.

This sequence belongs to the CobS family. The cofactor is Mg(2+).

Its subcellular location is the cell membrane. The catalysed reaction is alpha-ribazole + adenosylcob(III)inamide-GDP = adenosylcob(III)alamin + GMP + H(+). The enzyme catalyses alpha-ribazole 5'-phosphate + adenosylcob(III)inamide-GDP = adenosylcob(III)alamin 5'-phosphate + GMP + H(+). It functions in the pathway cofactor biosynthesis; adenosylcobalamin biosynthesis; adenosylcobalamin from cob(II)yrinate a,c-diamide: step 7/7. Joins adenosylcobinamide-GDP and alpha-ribazole to generate adenosylcobalamin (Ado-cobalamin). Also synthesizes adenosylcobalamin 5'-phosphate from adenosylcobinamide-GDP and alpha-ribazole 5'-phosphate. This chain is Adenosylcobinamide-GDP ribazoletransferase, found in Clostridium botulinum (strain Eklund 17B / Type B).